Here is a 60-residue protein sequence, read N- to C-terminus: Large ribosomal subunit protein bL32 (60 aa).

The disordered stretch occupies residues 1–43; it reads MAVQQNKKSPSKRGMHRSHDALTNPPLAIEPTTGEIHLRHHIS.

Belongs to the bacterial ribosomal protein bL32 family.

In Nitrosomonas europaea (strain ATCC 19718 / CIP 103999 / KCTC 2705 / NBRC 14298), this protein is Large ribosomal subunit protein bL32.